A 143-amino-acid polypeptide reads, in one-letter code: Large ribosomal subunit protein uL11 (143 aa).

It belongs to the universal ribosomal protein uL11 family. Part of the ribosomal stalk of the 50S ribosomal subunit. Interacts with L10 and the large rRNA to form the base of the stalk. L10 forms an elongated spine to which L12 dimers bind in a sequential fashion forming a multimeric L10(L12)X complex. In terms of processing, one or more lysine residues are methylated.

Forms part of the ribosomal stalk which helps the ribosome interact with GTP-bound translation factors. This Azoarcus sp. (strain BH72) protein is Large ribosomal subunit protein uL11.